The sequence spans 278 residues: Malonyl-[acyl-carrier protein] O-methyltransferase (278 aa).

It belongs to the methyltransferase superfamily.

The catalysed reaction is malonyl-[ACP] + S-adenosyl-L-methionine = malonyl-[ACP] methyl ester + S-adenosyl-L-homocysteine. It functions in the pathway cofactor biosynthesis; biotin biosynthesis. Functionally, converts the free carboxyl group of a malonyl-thioester to its methyl ester by transfer of a methyl group from S-adenosyl-L-methionine (SAM). It allows to synthesize pimeloyl-ACP via the fatty acid synthetic pathway. This chain is Malonyl-[acyl-carrier protein] O-methyltransferase, found in Brevibacillus brevis (strain 47 / JCM 6285 / NBRC 100599).